The primary structure comprises 172 residues: uncharacterized protein (172 aa).

One can recognise an HTH cro/C1-type domain in the interval 21-75 (FKRILLELGLTLKEFSEISGIPYSTLYKVIQGKDFRVSTLIKILKTIRSFEKDEN). The H-T-H motif DNA-binding region spans 32 to 51 (LKEFSEISGIPYSTLYKVIQ).

This is an uncharacterized protein from Methanocaldococcus jannaschii (strain ATCC 43067 / DSM 2661 / JAL-1 / JCM 10045 / NBRC 100440) (Methanococcus jannaschii).